A 335-amino-acid polypeptide reads, in one-letter code: Non-structural protein P9-1 (335 aa).

The segment covering F27–Q42 has biased composition (low complexity). The disordered stretch occupies residues F27–T48.

This Fiji disease virus (isolate Sugarcane) (FDV) protein is Non-structural protein P9-1 (S9).